The following is a 258-amino-acid chain: MSKVKLTKESIVALLTQGKDLEFEEDQNLVAFNFKTFCLENIDQIKKMSVISCLTFLKNRQSIMKVIKQSDFTFGKITIKKTSDRIGGTDMTFRRLDSLIRVRLVEETGNSENLNTIKSKIASHPLIQAYGLPLDDAKSVRLAIMLGGSLPLIASVDSFEMISVVLAIYQDAKYKDLGIDPKKYDTKEALGKVCTVLKSKAFEMNEDQVKKGKEYAAILSSSNPNAKGSVAMEHYSETLNKFYEMFGVKKQAKLAELA.

Belongs to the tospovirus nucleocapsid protein family. As to quaternary structure, homotrimer. Binds the viral genomic RNA.

The protein resides in the virion. Functionally, encapsidates the genome protecting it from nucleases. The encapsidated genomic RNA is termed the nucleocapsid (NC) and serves as template for transcription and replication. The NC have a helical organization. The sequence is that of Nucleoprotein (N) from Frankliniella occidentalis (Western flower thrips).